The chain runs to 201 residues: RILP-like protein 2 (201 aa).

One can recognise an RH1 domain in the interval 14–108 (GPEIALDKDP…LKDGPQMGVG (95 aa)). The stretch at 67–155 (LEMLEALVNQ…AQDELQCYKS (89 aa)) forms a coiled coil. The 77-residue stretch at 121–197 (RPRFTLQELR…TVKSLFSFKQ (77 aa)) folds into the RH2 domain. The disordered stretch occupies residues 177–201 (SPRENESKEKSTVKSLFSFKQGKQT). The segment covering 179 to 188 (RENESKEKST) has biased composition (basic and acidic residues).

The protein belongs to the RILPL family.

The protein resides in the cytoplasm. The protein localises to the cytosol. It is found in the cytoskeleton. It localises to the microtubule organizing center. Its subcellular location is the centrosome. The protein resides in the cell projection. The protein localises to the cilium. Functionally, involved in cell shape and neuronal morphogenesis, positively regulating the establishment and maintenance of dendritic spines. Plays a role in cellular protein transport. This is RILP-like protein 2 (rilpl2) from Xenopus tropicalis (Western clawed frog).